A 230-amino-acid polypeptide reads, in one-letter code: Ureidoacrylate amidohydrolase RutB (230 aa).

The Proton acceptor role is filled by D23. The active site involves K132. C165 acts as the Nucleophile in catalysis.

The protein belongs to the isochorismatase family. RutB subfamily.

It catalyses the reaction (Z)-3-ureidoacrylate + H2O + H(+) = (Z)-3-aminoacrylate + NH4(+) + CO2. The catalysed reaction is (Z)-3-ureidoacrylate + H2O = (Z)-3-aminoacrylate + carbamate + H(+). The enzyme catalyses (Z)-2-methylureidoacrylate + H2O + H(+) = (Z)-2-methylaminoacrylate + NH4(+) + CO2. In terms of biological role, hydrolyzes ureidoacrylate to form aminoacrylate and carbamate. The carbamate hydrolyzes spontaneously, thereby releasing one of the nitrogen atoms of the pyrimidine ring as ammonia and one of its carbon atoms as CO2. The protein is Ureidoacrylate amidohydrolase RutB of Yersinia enterocolitica serotype O:8 / biotype 1B (strain NCTC 13174 / 8081).